A 318-amino-acid polypeptide reads, in one-letter code: L-lactate dehydrogenase 1 (318 aa).

NAD(+) contacts are provided by residues valine 17, aspartate 38, lysine 43, tyrosine 69, and 83–84 (GA). Substrate-binding positions include glutamine 86, arginine 92, and 124-127 (NPVD). NAD(+)-binding positions include 122 to 124 (ATN) and serine 147. Residue 152–155 (DTGR) participates in substrate binding. Residues arginine 157 and histidine 172 each contribute to the beta-D-fructose 1,6-bisphosphate site. The active-site Proton acceptor is histidine 179. A Phosphotyrosine modification is found at tyrosine 224. Threonine 233 is a substrate binding site.

This sequence belongs to the LDH/MDH superfamily. LDH family. Homotetramer.

The protein localises to the cytoplasm. The catalysed reaction is (S)-lactate + NAD(+) = pyruvate + NADH + H(+). It functions in the pathway fermentation; pyruvate fermentation to lactate; (S)-lactate from pyruvate: step 1/1. With respect to regulation, allosterically activated by fructose 1,6-bisphosphate (FBP). Its function is as follows. Catalyzes the conversion of lactate to pyruvate. This Peribacillus psychrosaccharolyticus (Bacillus psychrosaccharolyticus) protein is L-lactate dehydrogenase 1.